The sequence spans 400 residues: Tryptophan synthase beta chain (400 aa).

Lysine 91 carries the post-translational modification N6-(pyridoxal phosphate)lysine.

This sequence belongs to the TrpB family. In terms of assembly, tetramer of two alpha and two beta chains. It depends on pyridoxal 5'-phosphate as a cofactor.

It catalyses the reaction (1S,2R)-1-C-(indol-3-yl)glycerol 3-phosphate + L-serine = D-glyceraldehyde 3-phosphate + L-tryptophan + H2O. Its pathway is amino-acid biosynthesis; L-tryptophan biosynthesis; L-tryptophan from chorismate: step 5/5. Functionally, the beta subunit is responsible for the synthesis of L-tryptophan from indole and L-serine. This is Tryptophan synthase beta chain from Listeria monocytogenes serotype 4a (strain HCC23).